A 1013-amino-acid polypeptide reads, in one-letter code: Trehalose monomycolate exporter MmpL3 (1013 aa).

At M1 to Y14 the chain is on the cytoplasmic side. The helical transmembrane segment at I15–G35 threads the bilayer. The Periplasmic segment spans residues N36–L196. Q40–Y44 provides a ligand contact to a 1,2-diacylglycero-3-phosphoethanolamine. The next 2 helical transmembrane spans lie at V197–I217 and G218–V238. Residues H239–F240 are Periplasmic-facing. The chain crosses the membrane as a helical span at residues F241 to I261. Over V262–V290 the chain is Cytoplasmic. A helical transmembrane segment spans residues V291 to F311. The Periplasmic portion of the chain corresponds to L312–Y317. Residues A318–L338 form a helical membrane-spanning segment. Residues A339–P401 are Cytoplasmic-facing. A helical membrane pass occupies residues I402–L422. Residues S423–M567 are Periplasmic-facing. Residues S485–V513 form a disordered region. The segment covering D493–S512 has biased composition (basic and acidic residues). The helical transmembrane segment at A568–L588 threads the bilayer. Topologically, residues P589–K591 are cytoplasmic. A helical membrane pass occupies residues A592–V612. At D613 to P630 the chain is on the periplasmic side. The helical transmembrane segment at M631–V651 threads the bilayer. An SQ109-binding site is contributed by D645. The Cytoplasmic segment spans residues S652 to L678. A helical transmembrane segment spans residues I679–V699. At M700–Y703 the chain is on the periplasmic side. A helical membrane pass occupies residues L704–V724. Residues P725–L1013 lie on the Cytoplasmic side of the membrane. Residues T754–L1013 are disordered. Residues P757–Q772 are compositionally biased toward basic and acidic residues. Composition is skewed to pro residues over residues H792–P803 and P820–A829. A compositionally biased stretch (low complexity) spans R842–A867. Over residues P875 to P885 the composition is skewed to pro residues. Positions R973–R996 are enriched in basic and acidic residues.

It belongs to the resistance-nodulation-cell division (RND) (TC 2.A.6) family. MmpL subfamily. In terms of assembly, monomer. Interacts with TtfA (via N-terminus); active trehalose monomycolate (TMM) biosynthesis is not required for the complex formation. Interacts with MSMEG_5308.

The protein localises to the cell inner membrane. It localises to the cell septum. Its subcellular location is the cell tip. Its activity is regulated as follows. Inhibited by the antimycobacterial compound BM212, a pyrrole derivative. Inhibited by the antitubercular drug SQ109. Inhibited by the adamantyl urea derivative AU1235, the indole carboxamide ICA38 and rimonabant, the antagonist for the cannabinoid receptor CB1. The dissociation constant (Kd) values for SQ109, AU1235, ICA38 and rimonabant are 1.65 uM, 0.29, 0.16 and 29.5, respectively. Inhibitory effects are due to binding of the inhibitors at the proton-transportation channel most likely dissipating the transmembrane electrochemical proton gradient needed for substrate translocation. Transports trehalose monomycolate (TMM) to the cell wall. Flips TMM across the inner membrane. Membrane potential is not required for this function. Transports probably phosphatidylethanolamine (PE) as well. Binds specifically both TMM and PE, but not trehalose dimycolate (TDM). Also binds diacylglycerol (DAG) and other phospholipids, including phosphatidylglycerol (PG), phosphatidylinositol (PI), and cardiolipin (CDL). Contributes to membrane potential, cell wall composition, antibiotic susceptibility and fitness. In Mycolicibacterium smegmatis (strain ATCC 700084 / mc(2)155) (Mycobacterium smegmatis), this protein is Trehalose monomycolate exporter MmpL3.